A 550-amino-acid chain; its full sequence is Solute carrier family 22 member 11 (550 aa).

At 1–10 (MAFSKLLEQA) the chain is on the cytoplasmic side. The helical transmembrane segment at 11–31 (GGVGLFQTLQVLTFILPCLMI) threads the bilayer. Topologically, residues 32–142 (PSQMLLENFS…DLVCSSQGLK (111 aa)) are extracellular. Residues Asn39, Asn56, and Asn99 are each glycosylated (N-linked (GlcNAc...) asparagine). Residues 143–163 (PLSQSIFMSGILVGSFIWGLL) form a helical membrane-spanning segment. At 164–174 (SYRFGRKPMLS) the chain is on the cytoplasmic side. The chain crosses the membrane as a helical span at residues 175–195 (WCCLQLAVAGTSTIFAPTFVI). At 196 to 200 (YCGLR) the chain is on the extracellular side. The chain crosses the membrane as a helical span at residues 201–221 (FVAAFGMAGIFLSSLTLMVEW). Residues 222–231 (TTTSRRAVTM) are Cytoplasmic-facing. A helical membrane pass occupies residues 232 to 252 (TVVGCAFSAGQAALGGLAFAL). Over 253–256 (RDWR) the chain is Extracellular. The helical transmembrane segment at 257-277 (TLQLAASVPFFAISLISWWLP) threads the bilayer. The Cytoplasmic segment spans residues 278–346 (ESARWLIIKG…FCVPVLRWRS (69 aa)). The helical transmembrane segment at 347 to 367 (CAMLVVNFSLLISYYGLVFDL) threads the bilayer. Topologically, residues 368–378 (QSLGRDIFLLQ) are extracellular. Residues 379–399 (ALFGAVDFLGRATTALLLSFL) traverse the membrane as a helical segment. At 400–402 (GRR) the chain is on the cytoplasmic side. A helical transmembrane segment spans residues 403–423 (TIQAGSQAMAGLAILANMLVP). Residues 424–430 (QDLQTLR) lie on the Extracellular side of the membrane. A helical transmembrane segment spans residues 431 to 451 (VVFAVLGKGCFGISLTCLTIY). The Cytoplasmic segment spans residues 452 to 463 (KAELFPTPVRMT). The chain crosses the membrane as a helical span at residues 464–484 (ADGILHTVGRLGAMMGPLILM). Residues 485–490 (SRQALP) are Extracellular-facing. The chain crosses the membrane as a helical span at residues 491–511 (LLPPLLYGVISIASSLVVLFF). Residues 512–550 (LPETQGLPLPDTIQDLESQKSTAAQGNRQEAVTVESTSL) are Cytoplasmic-facing. Positions 531-550 (KSTAAQGNRQEAVTVESTSL) are disordered.

Belongs to the major facilitator (TC 2.A.1) superfamily. Organic cation transporter (TC 2.A.1.19) family. N-glycosylated. Contains several complex-type N-glycans. In terms of tissue distribution, expressed in placental trophoblasts, syncytiotrophoblast and cytotrophoblast. Also located in the proximal tubules in kidneys.

Its subcellular location is the cell membrane. It localises to the apical cell membrane. It is found in the basal cell membrane. It carries out the reaction estrone 3-sulfate(out) + glutarate(in) = estrone 3-sulfate(in) + glutarate(out). The enzyme catalyses dehydroepiandrosterone 3-sulfate(out) = dehydroepiandrosterone 3-sulfate(in). The catalysed reaction is prostaglandin F2alpha(out) = prostaglandin F2alpha(in). It catalyses the reaction prostaglandin E2(out) = prostaglandin E2(in). Functionally, antiporter that mediates the transport of conjugated steroids and other specific organic anions at the basal membrane of syncytiotrophoblast and at the apical membrane of proximal tubule epithelial cells, in exchange for anionic compounds. May be responsible for placental absorption of fetal-derived steroid sulfates such as estrone sulfate (E1S) and the steroid hormone precursor dehydroepiandrosterone sulfate (DHEA-S), as well as clearing waste products and xenobiotics from the fetus. Maybe also be involved in placental urate homeostasis. Facilitates the renal reabsorption of organic anions such as urate and derived steroid sulfates. Organic anion glutarate acts as conteranion for E1S renal uptake. Possible transport mode may also include DHEA-S/E1S exchange. Also interacts with inorganic anions such as chloride and hydroxyl ions, therefore possible transport modes may include E1S/Cl(-), E1S/OH(-), urate/Cl(-) and urate/OH(-). Also mediates the transport of prostaglandin E2 (PGE2) and prostaglandin F2-alpha (PGF2-alpha) and may be involved in their renal excretion. Also able to uptake anionic drugs, diuretics, bile salts and ochratoxin A. Mediates the unidirectional efflux of glutamate and aspartate. Glutamate efflux down its transmembrane gradient may drive SLC22A11/OAT4-mediated placental uptake of E1S. This chain is Solute carrier family 22 member 11, found in Homo sapiens (Human).